The following is a 634-amino-acid chain: Chaperone protein HtpG (634 aa).

The a; substrate-binding stretch occupies residues 1–342 (MTVDTDKQTL…SADLSLNVSR (342 aa)). Residues 343–559 (EILQSGPVVD…QGDLGLQMRQ (217 aa)) form a b region. The interval 560–634 (LLEASGQAVP…LNKLLLELSA (75 aa)) is c.

It belongs to the heat shock protein 90 family. Homodimer.

The protein resides in the cytoplasm. Its function is as follows. Molecular chaperone. Has ATPase activity. The polypeptide is Chaperone protein HtpG (Xanthomonas campestris pv. campestris (strain ATCC 33913 / DSM 3586 / NCPPB 528 / LMG 568 / P 25)).